We begin with the raw amino-acid sequence, 116 residues long: Iron-sulfur cluster insertion protein ErpA (116 aa).

Iron-sulfur cluster-binding residues include cysteine 44, cysteine 108, and cysteine 110.

Belongs to the HesB/IscA family. As to quaternary structure, homodimer. Iron-sulfur cluster is required as a cofactor.

Its function is as follows. Required for insertion of 4Fe-4S clusters for at least IspG. This Shewanella putrefaciens (strain CN-32 / ATCC BAA-453) protein is Iron-sulfur cluster insertion protein ErpA.